The primary structure comprises 714 residues: P-loop NTPase domain-containing protein LPA1 (714 aa).

Over residues 1-11 the composition is skewed to low complexity; sequence MPMPPQCASSK. Disordered stretches follow at residues 1-42, 259-293, and 595-689; these read MPMP…PPPK, QKLD…PRTE, and FGSE…GSGN. Basic and acidic residues predominate over residues 271–285; sequence EGRDDTSDDKAHHGS. Positions 595–617 are enriched in acidic residues; it reads FGSEEDADDPPDAGTDEDLTDEE. The segment covering 618–636 has biased composition (basic and acidic residues); that stretch reads RDMHEIEAGSVDEHSTKSD. Over residues 659-670 the composition is skewed to polar residues; sequence AASSTKNSSNQE.

As to expression, expressed in roots, leaf blade shoots, leaf sheath shoots and panicles.

Required for the accumulation of phytic acid in seeds. Phytic acid is the primary storage form of phosphorus in cereal grains and other plant seeds. The chain is P-loop NTPase domain-containing protein LPA1 from Oryza sativa subsp. japonica (Rice).